Here is a 132-residue protein sequence, read N- to C-terminus: Protein NrdI (132 aa).

Belongs to the NrdI family.

Functionally, probably involved in ribonucleotide reductase function. The protein is Protein NrdI of Bartonella henselae (strain ATCC 49882 / DSM 28221 / CCUG 30454 / Houston 1) (Rochalimaea henselae).